A 212-amino-acid polypeptide reads, in one-letter code: FMN-dependent NADH:quinone oxidoreductase (212 aa).

Residues serine 9, 15 to 17 (SVS), and 138 to 141 (TRGG) contribute to the FMN site.

The protein belongs to the azoreductase type 1 family. As to quaternary structure, homodimer. The cofactor is FMN.

The enzyme catalyses 2 a quinone + NADH + H(+) = 2 a 1,4-benzosemiquinone + NAD(+). The catalysed reaction is N,N-dimethyl-1,4-phenylenediamine + anthranilate + 2 NAD(+) = 2-(4-dimethylaminophenyl)diazenylbenzoate + 2 NADH + 2 H(+). Functionally, quinone reductase that provides resistance to thiol-specific stress caused by electrophilic quinones. In terms of biological role, also exhibits azoreductase activity. Catalyzes the reductive cleavage of the azo bond in aromatic azo compounds to the corresponding amines. The polypeptide is FMN-dependent NADH:quinone oxidoreductase (Delftia acidovorans (strain DSM 14801 / SPH-1)).